Reading from the N-terminus, the 449-residue chain is Trigger factor (449 aa).

One can recognise a PPIase FKBP-type domain in the interval 173 to 258; sequence GDRVTVDFVG…LKKVEWPHLP (86 aa).

This sequence belongs to the FKBP-type PPIase family. Tig subfamily.

It is found in the cytoplasm. The catalysed reaction is [protein]-peptidylproline (omega=180) = [protein]-peptidylproline (omega=0). Its function is as follows. Involved in protein export. Acts as a chaperone by maintaining the newly synthesized protein in an open conformation. Functions as a peptidyl-prolyl cis-trans isomerase. The protein is Trigger factor of Burkholderia mallei (strain NCTC 10229).